The following is a 165-amino-acid chain: Copper-resistant cuproprotein CopI (165 aa).

Positions 1–23 are cleaved as a signal peptide; the sequence is MKNRILRPALLCVAALFATTAQA. Over residues 25-42 the composition is skewed to basic and acidic residues; it reads AGHDHGSAHAGAHAHDAD. Residues 25 to 50 form a disordered region; the sequence is AGHDHGSAHAGAHAHDADTPYGRPGD. 4 residues coordinate Cu(2+): histidine 93, cysteine 148, histidine 153, and methionine 158.

The protein belongs to the CopI family. Monomer.

It is found in the periplasm. In terms of biological role, involved in copper tolerance. Required for copper resistance under both aerobic and anaerobic photosynthetic growth conditions. Binds copper. Could be an important defense against copper in the periplasm and may protect not only c type cytochromes but also other proteins with cysteine residues from copper ions that may catalyze nonnative disulfide bond formation. In Rubrivivax gelatinosus (Rhodocyclus gelatinosus), this protein is Copper-resistant cuproprotein CopI.